Here is a 256-residue protein sequence, read N- to C-terminus: Type III pantothenate kinase (256 aa).

Position 6-13 (6-13) interacts with ATP; the sequence is DVGNSHIY. Substrate contacts are provided by residues tyrosine 99 and 106–109; that span reads GADR. The active-site Proton acceptor is the aspartate 108. Aspartate 129 is a binding site for K(+). Threonine 132 is a binding site for ATP. Substrate is bound at residue threonine 184.

This sequence belongs to the type III pantothenate kinase family. In terms of assembly, homodimer. NH4(+) is required as a cofactor. Requires K(+) as cofactor.

It is found in the cytoplasm. The catalysed reaction is (R)-pantothenate + ATP = (R)-4'-phosphopantothenate + ADP + H(+). It participates in cofactor biosynthesis; coenzyme A biosynthesis; CoA from (R)-pantothenate: step 1/5. Its function is as follows. Catalyzes the phosphorylation of pantothenate (Pan), the first step in CoA biosynthesis. This Legionella pneumophila (strain Corby) protein is Type III pantothenate kinase.